Reading from the N-terminus, the 542-residue chain is Protein NODULATION SIGNALING PATHWAY 1 (542 aa).

Positions 73-150 (TSTTSLEPCG…SNCNSGNSKE (78 aa)) are disordered. Over residues 92-103 (LPKKRNATDESS) the composition is skewed to basic and acidic residues. Over residues 136 to 148 (AKANGSNCNSGNS) the composition is skewed to low complexity. Residues 145–532 (SGNSKEGRWA…QPVSFCSLWK (388 aa)) form the GRAS domain. The interval 152 to 214 (RWAEQLLNPC…HLSSSSSSPT (63 aa)) is leucine repeat I (LRI). A VHIID region spans residues 233–332 (LLKFYEVSPW…GYNYYPRLLG (100 aa)). The VHIID motif lies at 269–273 (LHILD). The tract at residues 333–357 (YAQSININLQINRIENHSLQTLNAQ) is leucine repeat II (LRII). The tract at residues 367–452 (LIVCAQFRLH…RESDERRVME (86 aa)) is PFYRE. The tract at residues 455–532 (AAKALTNQRE…QPVSFCSLWK (78 aa)) is SAW.

Belongs to the GRAS family. In terms of tissue distribution, highly expressed in roots.

The protein localises to the nucleus. Transcriptional regulator essential for Nod-factor-induced gene expression. Acts downstream of calcium spiking and a calcium/calmodulin-dependent protein kinase required for activation of early nodulation gene expression. Acts as a common symbiosis gene that positively contributes to the early steps of the arbuscular mycorrhizal fungus and rhizobial infection processes in roots. Transcription factor involved in the positive regulation of the beta-carotene isomerase D27, which participates in a pathway leading to biosynthesis of strigolactones in roots. In Lotus japonicus (Lotus corniculatus var. japonicus), this protein is Protein NODULATION SIGNALING PATHWAY 1.